A 386-amino-acid polypeptide reads, in one-letter code: Lipoyl synthase, mitochondrial (386 aa).

[4Fe-4S] cluster is bound by residues Cys-115, Cys-120, Cys-126, Cys-146, Cys-150, Cys-153, and Ser-362. Positions 131–351 (ETGTATATIM…QKLGMEMGFR (221 aa)) constitute a Radical SAM core domain.

This sequence belongs to the radical SAM superfamily. Lipoyl synthase family. It depends on [4Fe-4S] cluster as a cofactor.

The protein localises to the mitochondrion. The catalysed reaction is [[Fe-S] cluster scaffold protein carrying a second [4Fe-4S](2+) cluster] + N(6)-octanoyl-L-lysyl-[protein] + 2 oxidized [2Fe-2S]-[ferredoxin] + 2 S-adenosyl-L-methionine + 4 H(+) = [[Fe-S] cluster scaffold protein] + N(6)-[(R)-dihydrolipoyl]-L-lysyl-[protein] + 4 Fe(3+) + 2 hydrogen sulfide + 2 5'-deoxyadenosine + 2 L-methionine + 2 reduced [2Fe-2S]-[ferredoxin]. The protein operates within protein modification; protein lipoylation via endogenous pathway; protein N(6)-(lipoyl)lysine from octanoyl-[acyl-carrier-protein]: step 2/2. Its function is as follows. Catalyzes the radical-mediated insertion of two sulfur atoms into the C-6 and C-8 positions of the octanoyl moiety bound to the lipoyl domains of lipoate-dependent enzymes, thereby converting the octanoylated domains into lipoylated derivatives. This is Lipoyl synthase, mitochondrial from Picea sitchensis (Sitka spruce).